Consider the following 187-residue polypeptide: MNGDGEQPGPGDGAARDELPSMDLVRRTLAEARAAARARGQDPGRGFAAGPAPRRVAGRRRSWSGPGPDTRDPQPLGKLTRDLAKKRGWSGHVAEGTVLGQWSQVVGAQIADHATPTALNEGVLSVTAESTAWATQLRIMQSQLLAKIAAAVGNGVVTSLKITGPASPSWRKGPRHIAGRGPRDTYG.

Residues 1 to 12 (MNGDGEQPGPGD) are compositionally biased toward gly residues. Disordered regions lie at residues 1–77 (MNGD…QPLG) and 166–187 (ASPS…DTYG). Basic and acidic residues predominate over residues 14 to 30 (AARDELPSMDLVRRTLA). The span at 31-55 (EARAAARARGQDPGRGFAAGPAPRR) shows a compositional bias: low complexity.

Belongs to the UPF0232 family.

This Mycobacterium ulcerans (strain Agy99) protein is UPF0232 protein MUL_0004.